A 1021-amino-acid chain; its full sequence is tRNA wybutosine-synthesizing protein 4 (1021 aa).

S-adenosyl-L-methionine is bound by residues Arg68, Asp122, 171-172, and Glu198; that span reads DL. Residues 826 to 980 form the JmjC domain; that stretch reads PTEAPANLAE…STGRDVYGNR (155 aa).

The protein belongs to the methyltransferase superfamily. LCMT family.

The enzyme catalyses 7-[(3S)-3-amino-3-carboxypropyl]wyosine(37) in tRNA(Phe) + S-adenosyl-L-methionine = 7-[(3S)-(3-amino-3-methoxycarbonyl)propyl]wyosine(37) in tRNA(Phe) + S-adenosyl-L-homocysteine. It catalyses the reaction 7-[(3S)-(3-amino-3-methoxycarbonyl)propyl]wyosine(37) in tRNA(Phe) + S-adenosyl-L-methionine + CO2 = wybutosine(37) in tRNA(Phe) + S-adenosyl-L-homocysteine + 2 H(+). It functions in the pathway tRNA modification; wybutosine-tRNA(Phe) biosynthesis. Its function is as follows. Probable S-adenosyl-L-methionine-dependent methyltransferase that acts as a component of the wybutosine biosynthesis pathway. Wybutosine is a hyper modified guanosine with a tricyclic base found at the 3'-position adjacent to the anticodon of eukaryotic phenylalanine tRNA. May methylate the carboxyl group of leucine residues to form alpha-leucine ester residues. In Gibberella zeae (strain ATCC MYA-4620 / CBS 123657 / FGSC 9075 / NRRL 31084 / PH-1) (Wheat head blight fungus), this protein is tRNA wybutosine-synthesizing protein 4 (PPM2).